The chain runs to 290 residues: BEL1-like homeodomain protein 11 (290 aa).

The segment at 20-36 is SR/KY domain; the sequence is SRYAKAVQCLVEEVIDI. Residues 81–152 form a BELL domain region; the sequence is ENHEIHIKIT…SLEEAIISQL (72 aa). Positions 202–264 form a DNA-binding region, homeobox; that stretch reads AWKPIRGLPE…NARVRLWKPM (63 aa).

This sequence belongs to the TALE/BELL homeobox family. In terms of assembly, may form heterodimeric complexes with TALE/KNOX proteins.

Its subcellular location is the nucleus. The polypeptide is BEL1-like homeodomain protein 11 (BLH11) (Arabidopsis thaliana (Mouse-ear cress)).